The primary structure comprises 772 residues: Transducin-like enhancer protein 4 (772 aa).

Disordered stretches follow at residues Met1–Pro24 and Leu183–Leu359. Positions Met1 to Gln137 are q domain. The interval His138–Ser205 is GP domain. Positions Pro184–Ile203 are enriched in basic and acidic residues. Residues Lys204–Ser213 are compositionally biased toward low complexity. Residues Ser206–Pro275 form a ccN domain region. Composition is skewed to basic and acidic residues over residues Ala216–Asp253 and Ser274–Ala290. The tract at residues Arg276–Val452 is SP domain. Low complexity predominate over residues Pro291 to Ser306. Basic and acidic residues predominate over residues Lys307 to Lys316. The segment covering Thr318–Pro329 has biased composition (polar residues). WD repeat units lie at residues Asn484–Pro522, Asn530–Lys569, Ser574–Gln613, Gly616–Gln655, Asp657–Leu696, Leu698–Gln737, and Lys739–Tyr772.

The protein belongs to the WD repeat Groucho/TLE family. Interacts with tcf7, tcf7l1, ripply2.2/bowline, dscr6/ripply3 and foxd3. Associates with tbx6 in the presence of ripply2.2/bowline. Interacts with EFNB1 through the SP domain. Ubiquitinated by XIAP/BIRC4. In terms of tissue distribution, expressed at high levels in the spleen and ovary.

The protein resides in the nucleus. Transcriptional corepressor. Functions with ripply2.2/bowline to down regulate transcription of tbx6-dependent gene expression. Represses transcription of siamois and nodal3. This Xenopus laevis (African clawed frog) protein is Transducin-like enhancer protein 4 (tle4).